Reading from the N-terminus, the 250-residue chain is 1-(5-phosphoribosyl)-5-[(5-phosphoribosylamino)methylideneamino] imidazole-4-carboxamide isomerase (250 aa).

D12 functions as the Proton acceptor in the catalytic mechanism. D134 functions as the Proton donor in the catalytic mechanism.

The protein belongs to the HisA/HisF family.

Its subcellular location is the cytoplasm. The catalysed reaction is 1-(5-phospho-beta-D-ribosyl)-5-[(5-phospho-beta-D-ribosylamino)methylideneamino]imidazole-4-carboxamide = 5-[(5-phospho-1-deoxy-D-ribulos-1-ylimino)methylamino]-1-(5-phospho-beta-D-ribosyl)imidazole-4-carboxamide. Its pathway is amino-acid biosynthesis; L-histidine biosynthesis; L-histidine from 5-phospho-alpha-D-ribose 1-diphosphate: step 4/9. The sequence is that of 1-(5-phosphoribosyl)-5-[(5-phosphoribosylamino)methylideneamino] imidazole-4-carboxamide isomerase from Actinobacillus pleuropneumoniae serotype 7 (strain AP76).